Consider the following 89-residue polypeptide: Small ribosomal subunit protein uS15 (89 aa).

This sequence belongs to the universal ribosomal protein uS15 family. As to quaternary structure, part of the 30S ribosomal subunit. Forms a bridge to the 50S subunit in the 70S ribosome, contacting the 23S rRNA.

Its function is as follows. One of the primary rRNA binding proteins, it binds directly to 16S rRNA where it helps nucleate assembly of the platform of the 30S subunit by binding and bridging several RNA helices of the 16S rRNA. In terms of biological role, forms an intersubunit bridge (bridge B4) with the 23S rRNA of the 50S subunit in the ribosome. The protein is Small ribosomal subunit protein uS15 of Clavibacter michiganensis subsp. michiganensis (strain NCPPB 382).